A 395-amino-acid chain; its full sequence is Acid ceramidase (395 aa).

A signal peptide spans 1-21 (MLGRSRLTFVLLSVTVTCSVA). A disulfide bridge connects residues C31 and C340. The Nucleophile role is filled by C143. N-linked (GlcNAc...) asparagine glycosylation is found at N173, N259, N342, and N348. Residues C388 and C392 are joined by a disulfide bond.

It belongs to the acid ceramidase family. In terms of assembly, heterodimer; disulfide-linked. The heterodimer is composed of the disulfide-linked alpha and beta chains produced by autocatalytic cleavage of the precursor. In terms of processing, N-glycosylated. Post-translationally, proteolytically cleaved into two chains alpha and beta that remain associated via a disulfide bond. Cleavage gives rise to a conformation change that activates the enzyme. The same catalytic Cys residue mediates the autoproteolytic cleavage and subsequent hydrolysis of lipid substrates. The beta chain may undergo an additional C-terminal processing.

The protein resides in the lysosome. Its subcellular location is the secreted. It catalyses the reaction an N-acylsphing-4-enine + H2O = sphing-4-enine + a fatty acid. It carries out the reaction N-dodecanoylsphing-4-enine + H2O = dodecanoate + sphing-4-enine. The enzyme catalyses N-tetradecanoylsphing-4-enine + H2O = tetradecanoate + sphing-4-enine. The catalysed reaction is N-hexadecanoylsphing-4-enine + H2O = sphing-4-enine + hexadecanoate. It catalyses the reaction N-octadecanoylsphing-4-enine + H2O = sphing-4-enine + octadecanoate. It carries out the reaction N-dodecanoyl-(4R)-hydroxysphinganine + H2O = (4R)-hydroxysphinganine + dodecanoate. The enzyme catalyses N-(dodecanoyl)-sphinganine + H2O = dodecanoate + sphinganine. The catalysed reaction is N-(acetyl)-sphing-4-enine + H2O = sphing-4-enine + acetate. It catalyses the reaction N-(hexanoyl)sphing-4-enine + H2O = hexanoate + sphing-4-enine. It carries out the reaction N-octanoylsphing-4-enine + H2O = octanoate + sphing-4-enine. The enzyme catalyses N-(9Z-octadecenoyl)-sphing-4-enine + H2O = sphing-4-enine + (9Z)-octadecenoate. The catalysed reaction is N-dodecanoylethanolamine + H2O = dodecanoate + ethanolamine. Its pathway is lipid metabolism; sphingolipid metabolism. Lysosomal ceramidase that hydrolyzes sphingolipid ceramides into sphingosine and free fatty acids at acidic pH. Ceramides, sphingosine, and its phosphorylated form sphingosine-1-phosphate are bioactive lipids that mediate cellular signaling pathways regulating several biological processes including cell proliferation, apoptosis and differentiation. Has a higher catalytic efficiency towards C12-ceramides versus other ceramides. Also catalyzes the reverse reaction allowing the synthesis of ceramides from fatty acids and sphingosine. For the reverse synthetic reaction, the natural sphingosine D-erythro isomer is more efficiently utilized as a substrate compared to D-erythro-dihydrosphingosine and D-erythro-phytosphingosine, while the fatty acids with chain lengths of 12 or 14 carbons are the most efficiently used. Also has an N-acylethanolamine hydrolase activity. By regulating the levels of ceramides, sphingosine and sphingosine-1-phosphate in the epidermis, mediates the calcium-induced differentiation of epidermal keratinocytes. Also indirectly regulates tumor necrosis factor/TNF-induced apoptosis. By regulating the intracellular balance between ceramides and sphingosine, in adrenocortical cells, probably also acts as a regulator of steroidogenesis. This is Acid ceramidase from Balaenoptera acutorostrata scammoni (North Pacific minke whale).